We begin with the raw amino-acid sequence, 354 residues long: L-lactate dehydrogenase (354 aa).

NAD(+) contacts are provided by residues 73 to 78 (DAVPDK) and R120. Substrate contacts are provided by R127, N159, and R190. Residue N159 coordinates NAD(+). Residue H214 is the Proton acceptor of the active site. Substrate is bound at residue T269. The interval 302-332 (HGIPDGTTSSSACPPRRPRRRPGRREMELTE) is disordered.

It belongs to the LDH/MDH superfamily. LDH family. In terms of assembly, homotetramer.

It catalyses the reaction (S)-lactate + NAD(+) = pyruvate + NADH + H(+). The protein operates within fermentation; pyruvate fermentation to lactate; (S)-lactate from pyruvate: step 1/1. The sequence is that of L-lactate dehydrogenase from Zea mays (Maize).